Reading from the N-terminus, the 506-residue chain is Secreted RxLR effector protein 134 (506 aa).

The N-terminal stretch at 1-19 (MQGAYCVAVALLIAASGQA) is a signal peptide. A RxLR-dEER motif is present at residues 50-71 (RVLQVSHYPKDDLMLLAGNEER).

Belongs to the RxLR effector family.

It is found in the secreted. It localises to the host nucleus. Secreted effector that completely suppresses the host cell death induced by cell death-inducing proteins. The polypeptide is Secreted RxLR effector protein 134 (Plasmopara viticola (Downy mildew of grapevine)).